A 581-amino-acid polypeptide reads, in one-letter code: Trehalase (581 aa).

This sequence belongs to the glycosyl hydrolase 15 family. Monomer.

It carries out the reaction alpha,alpha-trehalose + H2O = alpha-D-glucose + beta-D-glucose. Its pathway is glycan degradation; trehalose degradation; D-glucose from alpha,alpha-trehalose: step 1/1. Its activity is regulated as follows. Inhibited by validamycin A. Its function is as follows. Catalyzes the hydrolysis of alpha,alpha-trehalose into two molecules of D-glucose. This Thermoplasma acidophilum (strain ATCC 25905 / DSM 1728 / JCM 9062 / NBRC 15155 / AMRC-C165) protein is Trehalase.